Consider the following 206-residue polypeptide: RNA pyrophosphohydrolase (206 aa).

One can recognise a Nudix hydrolase domain in the interval 6–150; it reads GYRPNVGIVI…KRDVYRKVMK (145 aa). The short motif at 38–59 is the Nudix box element; sequence GGINEGENIETAMYRELYEEVG. Basic and acidic residues predominate over residues 162 to 191; sequence KPETVEKPRVERTEKRDFQKRDNQKREFRK. A disordered region spans residues 162–206; the sequence is KPETVEKPRVERTEKRDFQKRDNQKREFRKSARMWNNSHQKGKAQ.

The protein belongs to the Nudix hydrolase family. RppH subfamily. A divalent metal cation serves as cofactor.

Accelerates the degradation of transcripts by removing pyrophosphate from the 5'-end of triphosphorylated RNA, leading to a more labile monophosphorylated state that can stimulate subsequent ribonuclease cleavage. This is RNA pyrophosphohydrolase from Actinobacillus pleuropneumoniae serotype 7 (strain AP76).